The chain runs to 185 residues: Thioredoxin F2, chloroplastic (185 aa).

In terms of domain architecture, Thioredoxin spans 59–184 (RRIGSCVVRC…LLAAIEAARS (126 aa)). Catalysis depends on nucleophile residues C109 and C112. A disulfide bridge connects residues C109 and C112. C136 bears the S-glutathionyl cysteine; transient mark.

It belongs to the thioredoxin family. Plant F-type subfamily. In terms of processing, glutathionylation at Cys-136 decreases its ability to be reduced by ferredoxin-thioredoxin reductase and reduces its efficiency in activating target chloroplastic enzymes.

Its subcellular location is the plastid. It is found in the chloroplast stroma. Its function is as follows. Probable thiol-disulfide oxidoreductase involved in the redox regulation of enzymes of both reductive pentose phosphate pathway (Calvin-Benson cycle) and oxidative pentose phosphate pathway. This is Thioredoxin F2, chloroplastic from Arabidopsis thaliana (Mouse-ear cress).